The sequence spans 365 residues: Aminomethyltransferase (365 aa).

The protein belongs to the GcvT family. The glycine cleavage system is composed of four proteins: P, T, L and H.

It carries out the reaction N(6)-[(R)-S(8)-aminomethyldihydrolipoyl]-L-lysyl-[protein] + (6S)-5,6,7,8-tetrahydrofolate = N(6)-[(R)-dihydrolipoyl]-L-lysyl-[protein] + (6R)-5,10-methylene-5,6,7,8-tetrahydrofolate + NH4(+). Functionally, the glycine cleavage system catalyzes the degradation of glycine. The chain is Aminomethyltransferase from Chlorobium luteolum (strain DSM 273 / BCRC 81028 / 2530) (Pelodictyon luteolum).